The following is a 407-amino-acid chain: Imidazolonepropionase (407 aa).

Fe(3+)-binding residues include His-68 and His-70. Positions 68 and 70 each coordinate Zn(2+). Residues Arg-77, Tyr-140, and His-173 each contribute to the 4-imidazolone-5-propanoate site. An N-formimidoyl-L-glutamate-binding site is contributed by Tyr-140. His-238 provides a ligand contact to Fe(3+). A Zn(2+)-binding site is contributed by His-238. A 4-imidazolone-5-propanoate-binding site is contributed by Gln-241. Residue Asp-313 participates in Fe(3+) binding. Asp-313 is a Zn(2+) binding site. N-formimidoyl-L-glutamate is bound by residues Asn-315 and Gly-317. Thr-318 contributes to the 4-imidazolone-5-propanoate binding site.

The protein belongs to the metallo-dependent hydrolases superfamily. HutI family. Zn(2+) is required as a cofactor. It depends on Fe(3+) as a cofactor.

Its subcellular location is the cytoplasm. The enzyme catalyses 4-imidazolone-5-propanoate + H2O = N-formimidoyl-L-glutamate. It functions in the pathway amino-acid degradation; L-histidine degradation into L-glutamate; N-formimidoyl-L-glutamate from L-histidine: step 3/3. Catalyzes the hydrolytic cleavage of the carbon-nitrogen bond in imidazolone-5-propanoate to yield N-formimidoyl-L-glutamate. It is the third step in the universal histidine degradation pathway. This chain is Imidazolonepropionase, found in Burkholderia cenocepacia (strain HI2424).